Here is a 129-residue protein sequence, read N- to C-terminus: Large ribosomal subunit protein bL12c (129 aa).

Residues Lys-101–Gly-123 show a composition bias toward basic and acidic residues. The tract at residues Lys-101 to Lys-129 is disordered.

This sequence belongs to the bacterial ribosomal protein bL12 family. In terms of assembly, homodimer. Part of the ribosomal stalk of the 50S ribosomal subunit. Forms a multimeric L10(L12)X complex, where L10 forms an elongated spine to which 2 to 4 L12 dimers bind in a sequential fashion. Binds GTP-bound translation factors.

Its subcellular location is the plastid. It localises to the chloroplast. Functionally, forms part of the ribosomal stalk which helps the ribosome interact with GTP-bound translation factors. Is thus essential for accurate translation. The chain is Large ribosomal subunit protein bL12c from Guillardia theta (Cryptophyte).